Reading from the N-terminus, the 388-residue chain is Lipid-A-disaccharide synthase (388 aa).

It belongs to the LpxB family.

The catalysed reaction is a lipid X + a UDP-2-N,3-O-bis[(3R)-3-hydroxyacyl]-alpha-D-glucosamine = a lipid A disaccharide + UDP + H(+). It functions in the pathway bacterial outer membrane biogenesis; LPS lipid A biosynthesis. Functionally, condensation of UDP-2,3-diacylglucosamine and 2,3-diacylglucosamine-1-phosphate to form lipid A disaccharide, a precursor of lipid A, a phosphorylated glycolipid that anchors the lipopolysaccharide to the outer membrane of the cell. The sequence is that of Lipid-A-disaccharide synthase from Burkholderia thailandensis (strain ATCC 700388 / DSM 13276 / CCUG 48851 / CIP 106301 / E264).